The sequence spans 340 residues: Guanine nucleotide-binding protein G(I)/G(S)/G(T) subunit beta-1 (340 aa).

N-acetylserine is present on S2. A Phosphoserine modification is found at S2. WD repeat units follow at residues 46–94, 95–140, 141–181, 182–223, 224–267, 268–309, and 310–340; these read RTRR…HAIP, LRSS…RELA, GHTG…TTFT, GHTG…QTFT, GHES…YSHD, NIIC…GVLA, and GHDNRVSCLGVTDDGMAVATGSWDSFLKIWN. H266 is modified (phosphohistidine).

This sequence belongs to the WD repeat G protein beta family. In terms of assembly, g proteins are composed of 3 units, alpha, beta and gamma. The heterodimer formed by GNB1 and GNG2 interacts with ARHGEF5. The heterodimer formed by GNB1 and GNG2 interacts with GRK2. Forms a complex with GNAO1 and GNG3. Interacts with ARHGEF18 and RASD2. Forms complexes with TAS2R14 and G-proteins; these complexes play a role in the perception of bitterness. Component of the TAS2R14-GNAI1 complex, consisting of TAS2R14, GNAI1, GNB1 and GNG2. Component of the TAS2R14-GNAT3 complex, consisting of TAS2R14, GNAT3, GNB1 and GNG2. Component of the TAS2R14-GNAS2 complex, consisting of TAS2R14, GNAS2, GNB1 and GNG2. Post-translationally, phosphorylation at His-266 by NDKB contributes to G protein activation by increasing the high energetic phosphate transfer onto GDP.

Guanine nucleotide-binding proteins (G proteins) are involved as a modulator or transducer in various transmembrane signaling systems. The beta and gamma chains are required for the GTPase activity, for replacement of GDP by GTP, and for G protein-effector interaction. This Bos taurus (Bovine) protein is Guanine nucleotide-binding protein G(I)/G(S)/G(T) subunit beta-1 (GNB1).